Here is a 290-residue protein sequence, read N- to C-terminus: 4-hydroxy-3-methylbut-2-enyl diphosphate reductase (290 aa).

Cys13 serves as a coordination point for [4Fe-4S] cluster. (2E)-4-hydroxy-3-methylbut-2-enyl diphosphate-binding residues include His41 and His75. His41 and His75 together coordinate dimethylallyl diphosphate. 2 residues coordinate isopentenyl diphosphate: His41 and His75. Cys97 contributes to the [4Fe-4S] cluster binding site. His129 lines the (2E)-4-hydroxy-3-methylbut-2-enyl diphosphate pocket. A dimethylallyl diphosphate-binding site is contributed by His129. His129 serves as a coordination point for isopentenyl diphosphate. Glu131 functions as the Proton donor in the catalytic mechanism. (2E)-4-hydroxy-3-methylbut-2-enyl diphosphate is bound at residue Thr167. Cys198 is a [4Fe-4S] cluster binding site. Ser226, Ser227, Asn228, and Ser270 together coordinate (2E)-4-hydroxy-3-methylbut-2-enyl diphosphate. Residues Ser226, Ser227, Asn228, and Ser270 each coordinate dimethylallyl diphosphate. Isopentenyl diphosphate-binding residues include Ser226, Ser227, Asn228, and Ser270.

This sequence belongs to the IspH family. It depends on [4Fe-4S] cluster as a cofactor.

It catalyses the reaction isopentenyl diphosphate + 2 oxidized [2Fe-2S]-[ferredoxin] + H2O = (2E)-4-hydroxy-3-methylbut-2-enyl diphosphate + 2 reduced [2Fe-2S]-[ferredoxin] + 2 H(+). The enzyme catalyses dimethylallyl diphosphate + 2 oxidized [2Fe-2S]-[ferredoxin] + H2O = (2E)-4-hydroxy-3-methylbut-2-enyl diphosphate + 2 reduced [2Fe-2S]-[ferredoxin] + 2 H(+). The protein operates within isoprenoid biosynthesis; dimethylallyl diphosphate biosynthesis; dimethylallyl diphosphate from (2E)-4-hydroxy-3-methylbutenyl diphosphate: step 1/1. It participates in isoprenoid biosynthesis; isopentenyl diphosphate biosynthesis via DXP pathway; isopentenyl diphosphate from 1-deoxy-D-xylulose 5-phosphate: step 6/6. In terms of biological role, catalyzes the conversion of 1-hydroxy-2-methyl-2-(E)-butenyl 4-diphosphate (HMBPP) into a mixture of isopentenyl diphosphate (IPP) and dimethylallyl diphosphate (DMAPP). Acts in the terminal step of the DOXP/MEP pathway for isoprenoid precursor biosynthesis. The polypeptide is 4-hydroxy-3-methylbut-2-enyl diphosphate reductase (Parabacteroides distasonis (strain ATCC 8503 / DSM 20701 / CIP 104284 / JCM 5825 / NCTC 11152)).